The chain runs to 227 residues: Cytochrome c oxidase subunit 2 (227 aa).

Residues 1–14 (MAYTFQLGLQDATS) lie on the Mitochondrial intermembrane side of the membrane. A helical transmembrane segment spans residues 15–45 (PIMEELTNFHDHTLMIVFLISSLVLYVISLM). Over 46–59 (LTTKLTHTNTMDAQ) the chain is Mitochondrial matrix. Residues 60–87 (EVETIWTILPAVILILIALPSLRILYMM) form a helical membrane-spanning segment. Over 88–227 (DEINNPVLTV…HFENWSASMI (140 aa)) the chain is Mitochondrial intermembrane. Cu cation contacts are provided by His-161, Cys-196, Glu-198, Cys-200, His-204, and Met-207. Residue Glu-198 participates in Mg(2+) binding.

This sequence belongs to the cytochrome c oxidase subunit 2 family. In terms of assembly, component of the cytochrome c oxidase (complex IV, CIV), a multisubunit enzyme composed of 14 subunits. The complex is composed of a catalytic core of 3 subunits MT-CO1, MT-CO2 and MT-CO3, encoded in the mitochondrial DNA, and 11 supernumerary subunits COX4I, COX5A, COX5B, COX6A, COX6B, COX6C, COX7A, COX7B, COX7C, COX8 and NDUFA4, which are encoded in the nuclear genome. The complex exists as a monomer or a dimer and forms supercomplexes (SCs) in the inner mitochondrial membrane with NADH-ubiquinone oxidoreductase (complex I, CI) and ubiquinol-cytochrome c oxidoreductase (cytochrome b-c1 complex, complex III, CIII), resulting in different assemblies (supercomplex SCI(1)III(2)IV(1) and megacomplex MCI(2)III(2)IV(2)). Found in a complex with TMEM177, COA6, COX18, COX20, SCO1 and SCO2. Interacts with TMEM177 in a COX20-dependent manner. Interacts with COX20. Interacts with COX16. It depends on Cu cation as a cofactor.

The protein localises to the mitochondrion inner membrane. It carries out the reaction 4 Fe(II)-[cytochrome c] + O2 + 8 H(+)(in) = 4 Fe(III)-[cytochrome c] + 2 H2O + 4 H(+)(out). In terms of biological role, component of the cytochrome c oxidase, the last enzyme in the mitochondrial electron transport chain which drives oxidative phosphorylation. The respiratory chain contains 3 multisubunit complexes succinate dehydrogenase (complex II, CII), ubiquinol-cytochrome c oxidoreductase (cytochrome b-c1 complex, complex III, CIII) and cytochrome c oxidase (complex IV, CIV), that cooperate to transfer electrons derived from NADH and succinate to molecular oxygen, creating an electrochemical gradient over the inner membrane that drives transmembrane transport and the ATP synthase. Cytochrome c oxidase is the component of the respiratory chain that catalyzes the reduction of oxygen to water. Electrons originating from reduced cytochrome c in the intermembrane space (IMS) are transferred via the dinuclear copper A center (CU(A)) of subunit 2 and heme A of subunit 1 to the active site in subunit 1, a binuclear center (BNC) formed by heme A3 and copper B (CU(B)). The BNC reduces molecular oxygen to 2 water molecules using 4 electrons from cytochrome c in the IMS and 4 protons from the mitochondrial matrix. The chain is Cytochrome c oxidase subunit 2 (MT-CO2) from Niviventer culturatus (Oldfield white-bellied rat).